A 296-amino-acid polypeptide reads, in one-letter code: Sulfotransferase 1B1 (296 aa).

48–53 is a 3'-phosphoadenylyl sulfate binding site; it reads KSGTTW. A substrate-binding site is contributed by 107–109; sequence KTH. The active-site Proton acceptor is His-109. Residues Arg-131, Ser-139, Tyr-194, 228–233, and 258–260 each bind 3'-phosphoadenylyl sulfate; these read TSFEMM and RKG.

The protein belongs to the sulfotransferase 1 family. Expressed highly in the colon, kidney and small intestine of male and female dogs. Highly expressed in the jejunum and ileum of the male dog than the female dog, which displayed more expression in duodenum (at protein level).

It localises to the cytoplasm. It catalyses the reaction a phenol + 3'-phosphoadenylyl sulfate = an aryl sulfate + adenosine 3',5'-bisphosphate + H(+). It carries out the reaction 3,3',5-triiodo-L-thyronine + 3'-phosphoadenylyl sulfate = 3,3',5-triiodo-L-thyronine sulfate + adenosine 3',5'-bisphosphate + H(+). The catalysed reaction is 3,3',5'-triiodo-L-thyronine + 3'-phosphoadenylyl sulfate = 3,3',5'-triiodo-L-thyronine sulfate + adenosine 3',5'-bisphosphate + H(+). The enzyme catalyses 3,3'-diiodo-L-thyronine + 3'-phosphoadenylyl sulfate = 3,3'-diiodo-L-thyronine sulfate + adenosine 3',5'-bisphosphate + H(+). It catalyses the reaction 4-ethylphenol + 3'-phosphoadenylyl sulfate = 4-ethylphenyl sulfate + adenosine 3',5'-bisphosphate + H(+). Its function is as follows. Sulfotransferase that utilizes 3'-phospho-5'-adenylyl sulfate (PAPS) as sulfonate donor to catalyze the sulfate conjugation of dopamine, small phenols such as 1-naphthol and p-nitrophenol and thyroid hormones, including 3,3'-diiodothyronine, triidothyronine (T3) and reverse triiodothyronine (rT3). May play a role in gut microbiota-host metabolic interaction. O-sulfonates 4-ethylphenol (4-EP), a dietary tyrosine-derived metabolite produced by gut bacteria. The product 4-EPS crosses the blood-brain barrier and may negatively regulate oligodendrocyte maturation and myelination, affecting the functional connectivity of different brain regions associated with the limbic system. The protein is Sulfotransferase 1B1 (SULT1B1) of Canis lupus familiaris (Dog).